Here is a 367-residue protein sequence, read N- to C-terminus: Pyrimidine monooxygenase RutA (367 aa).

FMN is bound by residues 50–51 (IK), N116, E125, 141–142 (RY), and S191.

This sequence belongs to the NtaA/SnaA/DszA monooxygenase family. RutA subfamily.

It carries out the reaction uracil + FMNH2 + NADH + O2 = (Z)-3-ureidoacrylate + FMN + NAD(+) + H2O + H(+). It catalyses the reaction thymine + FMNH2 + NADH + O2 = (Z)-2-methylureidoacrylate + FMN + NAD(+) + H2O + H(+). Functionally, catalyzes the pyrimidine ring opening between N-3 and C-4 by an unusual flavin hydroperoxide-catalyzed mechanism, adding oxygen atoms in the process to yield ureidoacrylate peracid, that immediately reacts with FMN forming ureidoacrylate and FMN-N(5)-oxide. The FMN-N(5)-oxide reacts spontaneously with NADH to produce FMN. Requires the flavin reductase RutF to regenerate FMN in vivo. The protein is Pyrimidine monooxygenase RutA of Allorhizobium ampelinum (strain ATCC BAA-846 / DSM 112012 / S4) (Agrobacterium vitis (strain S4)).